The following is a 640-amino-acid chain: Portal protein (640 aa).

This sequence belongs to the herpesviridae portal protein family. As to quaternary structure, homododecamerizes. Interacts with terminase subunits TRM1 and TRM3.

Its subcellular location is the virion. It is found in the host nucleus. Its function is as follows. Forms a portal in the viral capsid through which viral DNA is translocated during DNA packaging. Assembles as a dodecamer at a single fivefold axe of the T=16 icosahedric capsid. Binds to the molecular motor that translocates the viral DNA, termed terminase. The sequence is that of Portal protein (U76) from Human herpesvirus 7 (strain JI) (HHV-7).